The sequence spans 100 residues: Small ribosomal subunit protein uS14c (100 aa).

It belongs to the universal ribosomal protein uS14 family. Part of the 30S ribosomal subunit.

It localises to the plastid. The protein localises to the chloroplast. Functionally, binds 16S rRNA, required for the assembly of 30S particles. This chain is Small ribosomal subunit protein uS14c, found in Lobularia maritima (Sweet alyssum).